The primary structure comprises 58 residues: Small ribosomal subunit protein eS31 (58 aa).

Residues Cys-29, Cys-32, Cys-48, and Cys-51 each coordinate Zn(2+). The segment at 29–51 adopts a C4-type zinc-finger fold; sequence CPRCGSFMAHHLKPVPRWHCGKC.

The protein belongs to the eukaryotic ribosomal protein eS31 family. As to quaternary structure, part of the 30S ribosomal subunit. Zn(2+) serves as cofactor.

The sequence is that of Small ribosomal subunit protein eS31 from Ignicoccus hospitalis (strain KIN4/I / DSM 18386 / JCM 14125).